The primary structure comprises 329 residues: Phosphoenolpyruvate transferase (329 aa).

D61 contacts 7,8-didemethyl-8-hydroxy-5-deazariboflavin.

The protein belongs to the CofD family. As to quaternary structure, homodimer. Requires Mg(2+) as cofactor.

It carries out the reaction enolpyruvoyl-2-diphospho-5'-guanosine + 7,8-didemethyl-8-hydroxy-5-deazariboflavin = dehydro coenzyme F420-0 + GMP + H(+). It participates in cofactor biosynthesis; coenzyme F420 biosynthesis. In terms of biological role, catalyzes the transfer of the phosphoenolpyruvate moiety from enoylpyruvoyl-2-diphospho-5'-guanosine (EPPG) to 7,8-didemethyl-8-hydroxy-5-deazariboflavin (FO) with the formation of dehydro coenzyme F420-0 and GMP. In Mycobacterium marinum (strain ATCC BAA-535 / M), this protein is Phosphoenolpyruvate transferase.